Consider the following 641-residue polypeptide: Protein GAMETE EXPRESSED 3 (641 aa).

An N-terminal signal peptide occupies residues Met-1–Gln-29. The chain crosses the membrane as a helical span at residues Ile-441–Phe-461. The disordered stretch occupies residues Ile-570 to Ala-627. Residues Glu-584–Asp-593 are compositionally biased toward basic and acidic residues. Positions Val-594–Asp-603 are enriched in acidic residues.

Expressed in mature siliques and in pollen, mainly in the sperm cells. Detected in the egg cell within the female gametophyte.

The protein resides in the cell membrane. In terms of biological role, required for micropylar pollen tube guidance. Plays a role during early embryo patterning. The polypeptide is Protein GAMETE EXPRESSED 3 (GEX3) (Arabidopsis thaliana (Mouse-ear cress)).